We begin with the raw amino-acid sequence, 546 residues long: MTTNYIFVTGGVVSSLGKGIAAASLAAILEARGLKVTMMKLDPYINVDPGTMSPTQHGEVFVTEDGAETDLDLGHYERFIRTKMTKRNNFTAGRVYADVLRKERRGDYLGATIQVIPHITNAIKDRVIAGSEGHDIAIVEVGGTVGDIESLPFMEAIRQLAVELGRERAMFMHLTLVPYLAAAGEVKTKPTQHSVKELLSIGIQPDILVCRSDRMIPANERKKIALFCNVPEKAVISMKDVDSIYKIPQLVKSQGLDDLVCTRFGIDAPEADLSEWEQVIYEEANPTGEVTIGMVGKYIELPDAYKSVNEALKHAGLKNRLNVTIKYVDSQDIETKGVELLEGLDAILVPGGFGDRGVEGKIRAAQYARENKVPYLGICLGMQVALIEYARNVAGMEGAHSTEFNKDTKYPVVGLITEWVDETGNVEERTESSDLGGTMRLGSQLCHLEKGTKARELYGSATIHERHRHRYEVNNVLRPQIEKAGLKVSGLSADKKLVEMIENPAHPWFVAAQFHPEFTSTPRDGHPLFAGFVKAAGQYSRGEFEK.

Residues 1-266 (MTTNYIFVTG…DDLVCTRFGI (266 aa)) form an amidoligase domain region. S14 is a CTP binding site. S14 provides a ligand contact to UTP. Residues 15–20 (SLGKGI) and D72 each bind ATP. Positions 72 and 140 each coordinate Mg(2+). Residues 147-149 (DIE), 187-192 (KTKPTQ), and K223 each bind CTP. Residues 187 to 192 (KTKPTQ) and K223 contribute to the UTP site. 239-241 (KDV) contacts ATP. Positions 291-542 (TIGMVGKYIE…VKAAGQYSRG (252 aa)) constitute a Glutamine amidotransferase type-1 domain. G352 contributes to the L-glutamine binding site. C379 serves as the catalytic Nucleophile; for glutamine hydrolysis. Residues 380–383 (LGMQ), E403, and R470 each bind L-glutamine. Catalysis depends on residues H515 and E517.

This sequence belongs to the CTP synthase family. Homotetramer.

It carries out the reaction UTP + L-glutamine + ATP + H2O = CTP + L-glutamate + ADP + phosphate + 2 H(+). It catalyses the reaction L-glutamine + H2O = L-glutamate + NH4(+). The catalysed reaction is UTP + NH4(+) + ATP = CTP + ADP + phosphate + 2 H(+). Its pathway is pyrimidine metabolism; CTP biosynthesis via de novo pathway; CTP from UDP: step 2/2. With respect to regulation, allosterically activated by GTP, when glutamine is the substrate; GTP has no effect on the reaction when ammonia is the substrate. The allosteric effector GTP functions by stabilizing the protein conformation that binds the tetrahedral intermediate(s) formed during glutamine hydrolysis. Inhibited by the product CTP, via allosteric rather than competitive inhibition. In terms of biological role, catalyzes the ATP-dependent amination of UTP to CTP with either L-glutamine or ammonia as the source of nitrogen. Regulates intracellular CTP levels through interactions with the four ribonucleotide triphosphates. In Vibrio parahaemolyticus serotype O3:K6 (strain RIMD 2210633), this protein is CTP synthase.